The primary structure comprises 85 residues: Cell division topological specificity factor (85 aa).

This sequence belongs to the MinE family.

Its function is as follows. Prevents the cell division inhibition by proteins MinC and MinD at internal division sites while permitting inhibition at polar sites. This ensures cell division at the proper site by restricting the formation of a division septum at the midpoint of the long axis of the cell. This is Cell division topological specificity factor from Xylella fastidiosa (strain M12).